Consider the following 97-residue polypeptide: Small ribosomal subunit protein bS6 (97 aa).

Belongs to the bacterial ribosomal protein bS6 family.

In terms of biological role, binds together with bS18 to 16S ribosomal RNA. The sequence is that of Small ribosomal subunit protein bS6 from Bifidobacterium longum (strain NCC 2705).